The primary structure comprises 84 residues: U8-theraphotoxin-Hhn1e (84 aa).

The signal sequence occupies residues 1–21 (MKVVLLVCLVWMMAMMELVSC). 5 disulfide bridges follow: C23–C35, C29–C44, C34–C67, C54–C75, and C69–C81.

It belongs to the AVIT (prokineticin) family. As to expression, expressed by the venom gland.

It localises to the secreted. This chain is U8-theraphotoxin-Hhn1e, found in Cyriopagopus hainanus (Chinese bird spider).